Reading from the N-terminus, the 361-residue chain is Very-long-chain 3-oxoacyl-CoA reductase (361 aa).

The chain crosses the membrane as a helical span at residues proline 32 to phenylalanine 52. Residues valine 79, aspartate 133, asparagine 163, arginine 198, tyrosine 236, lysine 240, valine 269, and serine 271 each contribute to the NADP(+) site. The active-site Proton donor is the tyrosine 236. The Lowers pKa of active site Tyr role is filled by lysine 240.

Belongs to the short-chain dehydrogenases/reductases (SDR) family.

The protein localises to the endoplasmic reticulum membrane. It carries out the reaction a very-long-chain (3R)-3-hydroxyacyl-CoA + NADP(+) = a very-long-chain 3-oxoacyl-CoA + NADPH + H(+). It functions in the pathway lipid metabolism; fatty acid biosynthesis. Component of the microsomal membrane bound fatty acid elongation system, which produces the 26-carbon very long-chain fatty acids (VLCFA) from palmitate. Catalyzes the reduction of the 3-ketoacyl-CoA intermediate that is formed in each cycle of fatty acid elongation. VLCFAs serve as precursors for ceramide and sphingolipids. The protein is Very-long-chain 3-oxoacyl-CoA reductase of Cryptococcus neoformans var. neoformans serotype D (strain B-3501A) (Filobasidiella neoformans).